Reading from the N-terminus, the 499-residue chain is Cytochrome P450 2M1 (499 aa).

Residue cysteine 441 participates in heme binding.

Belongs to the cytochrome P450 family. The cofactor is heme. In kidney and in liver from juvenile and sexually mature trout from both sexes.

The protein resides in the endoplasmic reticulum membrane. It localises to the microsome membrane. It carries out the reaction an organic molecule + reduced [NADPH--hemoprotein reductase] + O2 = an alcohol + oxidized [NADPH--hemoprotein reductase] + H2O + H(+). Functionally, has (omega-6)-hydroxylation activity toward lauric acid. The polypeptide is Cytochrome P450 2M1 (cyp2m1) (Oncorhynchus mykiss (Rainbow trout)).